Consider the following 247-residue polypeptide: MGYNRALRYSKHEGTTCVIDNQHYKSLGAVLKDVKHKKDRLREAEIEPVLDIADQYMVTEDPFRGPGKNVRITLFKECRRVEPDTLKLVCNWSGKEFLREMWTRFISEEFPITTDQQIMNMWFEIQVRPMQPNRCYKFTMQYALDAHPDYVPHDVIRAQDPYYIGPNNIERINLKKGFAFPLMCLQSVYNDNFETFFEDVLWPYFHRPLVYIGTTSSETEEILLEVSFLFKIKEFAPDVPLYTGPAY.

It belongs to the polyhedrin family.

Component of the virus occlusion bodies, which are large proteinaceous structures, that protect the virus from the outside environment for extended periods until they are ingested by insect larvae. The chain is Granulin from Pieris brassicae granulosis virus (PbGV).